The primary structure comprises 200 residues: ATP-dependent Clp protease proteolytic subunit 2 (200 aa).

Serine 99 serves as the catalytic Nucleophile. The active site involves histidine 123.

The protein belongs to the peptidase S14 family. As to quaternary structure, fourteen ClpP subunits assemble into 2 heptameric rings which stack back to back to give a disk-like structure with a central cavity, resembling the structure of eukaryotic proteasomes.

Its subcellular location is the cytoplasm. The enzyme catalyses Hydrolysis of proteins to small peptides in the presence of ATP and magnesium. alpha-casein is the usual test substrate. In the absence of ATP, only oligopeptides shorter than five residues are hydrolyzed (such as succinyl-Leu-Tyr-|-NHMec, and Leu-Tyr-Leu-|-Tyr-Trp, in which cleavage of the -Tyr-|-Leu- and -Tyr-|-Trp bonds also occurs).. Functionally, cleaves peptides in various proteins in a process that requires ATP hydrolysis. Has a chymotrypsin-like activity. Plays a major role in the degradation of misfolded proteins. This is ATP-dependent Clp protease proteolytic subunit 2 from Symbiobacterium thermophilum (strain DSM 24528 / JCM 14929 / IAM 14863 / T).